The chain runs to 118 residues: Putative pterin-4-alpha-carbinolamine dehydratase (118 aa).

The protein belongs to the pterin-4-alpha-carbinolamine dehydratase family.

It catalyses the reaction (4aS,6R)-4a-hydroxy-L-erythro-5,6,7,8-tetrahydrobiopterin = (6R)-L-erythro-6,7-dihydrobiopterin + H2O. This chain is Putative pterin-4-alpha-carbinolamine dehydratase, found in Pseudomonas paraeruginosa (strain DSM 24068 / PA7) (Pseudomonas aeruginosa (strain PA7)).